The sequence spans 534 residues: Zinc finger protein 671 (534 aa).

In terms of domain architecture, KRAB spans 49–120 (VVFEDVFVYF…DQVDMTSATE (72 aa)). The C2H2-type 1; degenerate zinc finger occupies 192-214 (YLCGACGKQFWFSTDFDQHQNQP). 9 consecutive C2H2-type zinc fingers follow at residues 285-307 (HRCG…QRIH), 313-335 (YECN…QTVH), 341-363 (YECS…RRVH), 369-391 (YQCG…QEVH), 397-419 (YVCS…QRTH), 425-447 (YECS…WRIH), 451-473 (YECS…QKVH), 479-501 (YECS…WKVH), and 507-529 (YVCS…QRVH).

Belongs to the krueppel C2H2-type zinc-finger protein family.

It localises to the nucleus. May be involved in transcriptional regulation. The polypeptide is Zinc finger protein 671 (ZNF671) (Homo sapiens (Human)).